A 265-amino-acid chain; its full sequence is MNTYAQESKLRLKTKIGADGRCVIEDNFFTPPFKLMAPFYPKDDLAEIMLLAVSPGLMKGDAQDVQLNIGPNCKLRITSQSFEKIHNTEDGFASRDMHIVVGENAFLDFAPFPLIPFENAHFKGNTTISLRSSSQLLYSEIIVAGRVACNELFQFNRLHTKISILQDEKPIYYDNTILDPKTTDMMNMCMFDGYTHYLNLVLVNCPIELSGVRGLIEESEGVDGAVSEIASSHLCVKALAKGSEPLLHLREKIARLITQTITPKI.

Belongs to the UreD family. In terms of assembly, ureH, UreF and UreG form a complex that acts as a GTP-hydrolysis-dependent molecular chaperone, activating the urease apoprotein by helping to assemble the nickel containing metallocenter of UreC. The UreE protein probably delivers the nickel.

Its subcellular location is the cytoplasm. In terms of biological role, required for maturation of urease via the functional incorporation of the urease nickel metallocenter. This chain is Urease accessory protein UreH, found in Helicobacter pylori (strain HPAG1).